The chain runs to 105 residues: Co-chaperonin GroES (105 aa).

Belongs to the GroES chaperonin family. As to quaternary structure, heptamer of 7 subunits arranged in a ring. Interacts with the chaperonin GroEL.

Its subcellular location is the cytoplasm. Its function is as follows. Together with the chaperonin GroEL, plays an essential role in assisting protein folding. The GroEL-GroES system forms a nano-cage that allows encapsulation of the non-native substrate proteins and provides a physical environment optimized to promote and accelerate protein folding. GroES binds to the apical surface of the GroEL ring, thereby capping the opening of the GroEL channel. This Methylovorus sp. (strain SS1 / DSM 11726) protein is Co-chaperonin GroES.